The primary structure comprises 105 residues: Transmembrane protein 273 (105 aa).

Positions 1–19 (MNLGVSMLRILFLLDVGGA) are cleaved as a signal peptide. Over 20–38 (QVLATGKTPGAEIDFKYAL) the chain is Extracellular. Residues 39–59 (IGTAVGVAISAGFLALKICMI) form a helical membrane-spanning segment. Over 60–105 (RRHLFDDDSSDLKSTPGGLSDTIPLKKRAPRRNHNFSKRDAQVIEL) the chain is Cytoplasmic.

The protein resides in the membrane. The polypeptide is Transmembrane protein 273 (Homo sapiens (Human)).